The chain runs to 321 residues: 2,3,4,5-tetrahydropyridine-2,6-dicarboxylate N-succinyltransferase (321 aa).

Residues D166 and E183 each contribute to the Mg(2+) site. E199 functions as the Acyl-anhydride intermediate in the catalytic mechanism. Residues R201, G216, S219, A242, 257–258 (EA), G265, K281, and 294–297 (RRNS) each bind succinyl-CoA.

This sequence belongs to the type 2 tetrahydrodipicolinate N-succinyltransferase family. Homotrimer.

The protein localises to the cytoplasm. It catalyses the reaction (S)-2,3,4,5-tetrahydrodipicolinate + succinyl-CoA + H2O = (S)-2-succinylamino-6-oxoheptanedioate + CoA. It participates in amino-acid biosynthesis; L-lysine biosynthesis via DAP pathway; LL-2,6-diaminopimelate from (S)-tetrahydrodipicolinate (succinylase route): step 1/3. Its function is as follows. Catalyzes the conversion of the cyclic tetrahydrodipicolinate (THDP) into the acyclic N-succinyl-L-2-amino-6-oxopimelate using succinyl-CoA. In Rothia mucilaginosa (strain DY-18) (Stomatococcus mucilaginosus), this protein is 2,3,4,5-tetrahydropyridine-2,6-dicarboxylate N-succinyltransferase.